The primary structure comprises 368 residues: UDP-N-acetylglucosamine--N-acetylmuramyl-(pentapeptide) pyrophosphoryl-undecaprenol N-acetylglucosamine transferase (368 aa).

UDP-N-acetyl-alpha-D-glucosamine is bound by residues 10-12 (TGG), asparagine 126, serine 200, isoleucine 255, and glutamine 300.

This sequence belongs to the glycosyltransferase 28 family. MurG subfamily.

It localises to the cell membrane. The enzyme catalyses Mur2Ac(oyl-L-Ala-gamma-D-Glu-L-Lys-D-Ala-D-Ala)-di-trans,octa-cis-undecaprenyl diphosphate + UDP-N-acetyl-alpha-D-glucosamine = beta-D-GlcNAc-(1-&gt;4)-Mur2Ac(oyl-L-Ala-gamma-D-Glu-L-Lys-D-Ala-D-Ala)-di-trans,octa-cis-undecaprenyl diphosphate + UDP + H(+). It functions in the pathway cell wall biogenesis; peptidoglycan biosynthesis. Functionally, cell wall formation. Catalyzes the transfer of a GlcNAc subunit on undecaprenyl-pyrophosphoryl-MurNAc-pentapeptide (lipid intermediate I) to form undecaprenyl-pyrophosphoryl-MurNAc-(pentapeptide)GlcNAc (lipid intermediate II). The sequence is that of UDP-N-acetylglucosamine--N-acetylmuramyl-(pentapeptide) pyrophosphoryl-undecaprenol N-acetylglucosamine transferase from Lactobacillus helveticus (strain DPC 4571).